Consider the following 413-residue polypeptide: MEKSQPLSEFFSKQLVDPVSDALRSHTCSEQEMTLLESAIVHARDSLLEEIQRSKISEDVTQTVDCLLSRVDELLEETRNFAPISPLSSEAPDILPAMILFNSLCSSKSLDLEPIEIKVEAMENPVVSPPIFSSDDSVKGMPSRKRAKRSLEDTVQMLSKENSVSPPPPSLPFVLPQIPVPIPFSNAALMQRWLGHPLTNPAYLNAMFQHQPAPKPSEEQFAALMKITMHAANFMKTVPQLPVSNHFTESDAEDIKIDVESDEGEIEVSPSPSTGDITENESSSSSTGPMISPNCGDGDCALEKPFICMHNNCGKRFANKFLLKKHMFIHTGLRPHTCPHCHKKFNRKDNLLRHKKTHSPTSAHLGPILPKNPFHGIPQLPVLHNIALTQGFSHFHALKMSLETGATAVRSLS.

2 disordered regions span residues 130–151 and 259–290; these read PIFS…KRSL and VESD…TGPM. The span at 270-281 shows a compositional bias: polar residues; sequence PSPSTGDITENE. 2 consecutive C2H2-type zinc fingers follow at residues 306-330 and 336-358; these read FICM…MFIH and HTCP…KKTH.

The protein resides in the nucleus. The chain is Putative zinc finger protein B0310.2 from Caenorhabditis elegans.